A 459-amino-acid chain; its full sequence is Cysteine--tRNA ligase (459 aa).

Position 28 (cysteine 28) interacts with Zn(2+). A 'HIGH' region motif is present at residues 30–40 (VTVYDLCHIGH). The Zn(2+) site is built by cysteine 209, histidine 234, and glutamate 238. Residues 266 to 270 (KMSKS) carry the 'KMSKS' region motif. Lysine 269 contacts ATP.

It belongs to the class-I aminoacyl-tRNA synthetase family. As to quaternary structure, monomer. Zn(2+) serves as cofactor.

Its subcellular location is the cytoplasm. The enzyme catalyses tRNA(Cys) + L-cysteine + ATP = L-cysteinyl-tRNA(Cys) + AMP + diphosphate. This is Cysteine--tRNA ligase (cysS) from Haemophilus influenzae (strain ATCC 51907 / DSM 11121 / KW20 / Rd).